A 210-amino-acid polypeptide reads, in one-letter code: Large ribosomal subunit protein uL4 (210 aa).

In terms of assembly, part of the 50S ribosomal subunit. The N-terminus is blocked.

Its function is as follows. One of the primary rRNA binding proteins, this protein initially binds near the 5'-end of the 23S rRNA. It is important during the early stages of 50S assembly. It makes multiple contacts with different domains of the 23S rRNA in the assembled 50S subunit and ribosome. Functionally, forms part of the polypeptide exit tunnel. This protein can be incorporated into E.coli ribosomes in vivo, which resulted in decreased peptidyltransferase (Ptase) activity of the hybrid ribosomes. The hybrid 50S subunits associate less well with 30S subunits to form the ribosome. In Thermus thermophilus (strain ATCC 27634 / DSM 579 / HB8), this protein is Large ribosomal subunit protein uL4 (rplD).